The chain runs to 37 residues: Large ribosomal subunit protein bL36 (37 aa).

It belongs to the bacterial ribosomal protein bL36 family.

This is Large ribosomal subunit protein bL36 from Synechococcus elongatus (strain ATCC 33912 / PCC 7942 / FACHB-805) (Anacystis nidulans R2).